A 372-amino-acid polypeptide reads, in one-letter code: MLKRKPSNASDKEKHQKPKRSSSFGNFDRFRNNSVSKSDDSIEVHDRELTNGSEEQSKTSSSGGSLGKKVRAISWTMKKKVGKKYIKALSEEKEEESGEEALPYRNSDPMIGTHTEKISLKASDSMDSLYSGQSSSSGITSCSDGTSNRDSFRLDDDSPYSGPFCGRAKVHTDFTPSPYDTDSLKIKKGDIIDIICKTPMGMWTGMLNNKVGNFKFIYVDVILEEEAAPKKIKVPRSRRRENHQTIQEFLERIHLQEYTSTLLLNGYETLDDLKDIKESHLIELNIADPEDRARLLSAAESLLDEETTVEHEKESVPLSSNPDILSASQLEDCPRDSGCYISSENSDNGKEDLESENLSDMVQKIAITESSD.

The tract at residues 1-71 is disordered; the sequence is MLKRKPSNAS…SGGSLGKKVR (71 aa). The short motif at 20 to 25 is the Important for interaction with 14-3-3 proteins element; that stretch reads RSSSFG. S23 and S34 each carry phosphoserine. Basic and acidic residues predominate over residues 37–49; that stretch reads KSDDSIEVHDREL. Low complexity predominate over residues 52 to 63; sequence GSEEQSKTSSSG. At S74 the chain carries Phosphoserine. Position 76 is a phosphothreonine (T76). 3 positions are modified to phosphoserine: S90, S97, and S119. The tract at residues 90–111 is disordered; it reads SEEKEEESGEEALPYRNSDPMI. Residues 129-146 show a composition bias toward low complexity; that stretch reads LYSGQSSSSGITSCSDGT. Residues 129–153 form a disordered region; the sequence is LYSGQSSSSGITSCSDGTSNRDSFR. Position 160 is a phosphotyrosine (Y160). The 62-residue stretch at 163 to 224 folds into the SH3 domain; sequence PFCGRAKVHT…KFIYVDVILE (62 aa). The region spanning 241–305 is the SAM domain; that stretch reads ENHQTIQEFL…LSAAESLLDE (65 aa). Residues 304 to 372 are disordered; the sequence is DEETTVEHEK…QKIAITESSD (69 aa). Residues 317–329 show a composition bias toward polar residues; sequence PLSSNPDILSASQ.

As to quaternary structure, interacts with FASLG. Interacts with phosphotyrosine containing proteins. Interacts (via SH3 domain) with CTTN. Interacts (phosphorylated at Ser-23) with YWHAB, YWHAE, YWHAG, YWHAH, YWHAZ and SFN. Interacts directly with SAP30 and HDAC1. Identified in a complex with SAP30 and HDAC1. In terms of tissue distribution, detected in spleen and lymph node (at protein level).

The protein resides in the nucleus. The protein localises to the cytoplasm. It localises to the cell projection. Its subcellular location is the ruffle. Negative regulator of B-cell activation. Down-regulates cell proliferation (in vitro). Promotes RAC1-dependent membrane ruffle formation and reorganization of the actin cytoskeleton. Regulates cell spreading and cell polarization. Stimulates HDAC1 activity. Regulates LYN activity by modulating its tyrosine phosphorylation. This Mus musculus (Mouse) protein is SAM domain-containing protein SAMSN-1 (Samsn1).